A 153-amino-acid polypeptide reads, in one-letter code: Ribosome maturation factor RimP (153 aa).

The protein belongs to the RimP family.

It is found in the cytoplasm. Functionally, required for maturation of 30S ribosomal subunits. The protein is Ribosome maturation factor RimP of Trichormus variabilis (strain ATCC 29413 / PCC 7937) (Anabaena variabilis).